Here is a 295-residue protein sequence, read N- to C-terminus: Inward rectifier potassium channel Kirbac3.1 (295 aa).

Over 1 to 47 the chain is Cytoplasmic; the sequence is MTGGMKPPARKPRILNSDGSSNITRLGLEKRGWLDDHYHDLLTVSWP. The chain crosses the membrane as a helical span at residues 48–69; sequence VFITLITGLYLVTNALFALAYL. At 70 to 82 the chain is on the extracellular side; it reads ACGDVIENARPGS. The helical; Pore-forming intramembrane region spans 83–95; it reads FTDAFFFSVQTMA. The Selectivity filter motif lies at 96-100; sequence TIGYG. The helical transmembrane segment at 107-131 threads the bilayer; it reads PLANTLVTLEALCGMLGLAVAASLI. The Cytoplasmic portion of the chain corresponds to 132–295; it reads YARFTRPTAG…DLGKFHEIAQ (164 aa).

The protein belongs to the inward rectifier-type potassium channel (TC 1.A.2.1) family. KCNJ11 subfamily. Homotetramer.

It localises to the membrane. Inward rectifier potassium channel that mediates potassium uptake into the cell. Inward rectifier potassium channels are characterized by a greater tendency to allow potassium to flow into the cell rather than out of it. The inward rectification may be achieved by the blockage of outward current by cytoplasmic divalent metal ions and polyamines. Complements an E.coli mutant that is defective in K(+) uptake. This chain is Inward rectifier potassium channel Kirbac3.1, found in Paramagnetospirillum magnetotacticum (Aquaspirillum magnetotacticum).